We begin with the raw amino-acid sequence, 253 residues long: Hydroxypyruvate/pyruvate aldolase (253 aa).

Catalysis depends on His48, which acts as the Proton acceptor. Residues Glu151 and Asp177 each coordinate a divalent metal cation.

This sequence belongs to the HpcH/HpaI aldolase family. A divalent metal cation is required as a cofactor.

The catalysed reaction is D-glyceraldehyde + pyruvate = 2-dehydro-3-deoxy-L-galactonate. In terms of biological role, aldolase which can catalyze in vitro the aldolisation reaction between hydroxypyruvate (HPA) or pyruvate (PA) and D-glyceraldehyde (D-GA). The condensation of pyruvate and D-glyceraldehyde produces 2-dehydro-3-deoxy-L-galactonate. Has weak activity with hydroxypyruvate and D-glyceraldehyde. The protein is Hydroxypyruvate/pyruvate aldolase of Sagittula stellata (strain ATCC 700073 / DSM 11524 / E-37).